The primary structure comprises 331 residues: Biotin synthase (331 aa).

The region spanning 52-277 (PEVEVEGIVS…RTILRYAGGR (226 aa)) is the Radical SAM core domain. Residues cysteine 67, cysteine 71, and cysteine 74 each coordinate [4Fe-4S] cluster. Cysteine 110, cysteine 202, and arginine 272 together coordinate [2Fe-2S] cluster.

The protein belongs to the radical SAM superfamily. Biotin synthase family. In terms of assembly, homodimer. [4Fe-4S] cluster is required as a cofactor. [2Fe-2S] cluster serves as cofactor.

It carries out the reaction (4R,5S)-dethiobiotin + (sulfur carrier)-SH + 2 reduced [2Fe-2S]-[ferredoxin] + 2 S-adenosyl-L-methionine = (sulfur carrier)-H + biotin + 2 5'-deoxyadenosine + 2 L-methionine + 2 oxidized [2Fe-2S]-[ferredoxin]. It functions in the pathway cofactor biosynthesis; biotin biosynthesis; biotin from 7,8-diaminononanoate: step 2/2. Its function is as follows. Catalyzes the conversion of dethiobiotin (DTB) to biotin by the insertion of a sulfur atom into dethiobiotin via a radical-based mechanism. The polypeptide is Biotin synthase (Salinispora tropica (strain ATCC BAA-916 / DSM 44818 / JCM 13857 / NBRC 105044 / CNB-440)).